Reading from the N-terminus, the 627-residue chain is DEAD-box ATP-dependent RNA helicase 35A (627 aa).

2 stretches are compositionally biased toward low complexity: residues 1–15 (MAAA…AAAA) and 52–61 (SSSAAEAASD). 2 disordered regions span residues 1–23 (MAAA…EDNY) and 40–85 (LRRL…LEAS). The span at 62-72 (LPPPPPPPPNQ) shows a compositional bias: pro residues. The Q motif motif lies at 182-210 (RDFRDLRLPEPMLRKLREKGIVQPTPIQV). A Helicase ATP-binding domain is found at 213–397 (LPVVLSGRDM…KSALVKPVIV (185 aa)). ATP is bound at residue 226–233 (AFTGSGKT). The DEAD box motif lies at 345–348 (DEAD). The 161-residue stretch at 408–568 (DVIQEVEYVK…RIPPVLAELN (161 aa)) folds into the Helicase C-terminal domain. The segment at 584–601 (KGCAYCGGLGHRVTDCPK) adopts a CCHC-type zinc-finger fold.

Belongs to the DEAD box helicase family. DDX41 subfamily.

The catalysed reaction is ATP + H2O = ADP + phosphate + H(+). The sequence is that of DEAD-box ATP-dependent RNA helicase 35A from Oryza sativa subsp. japonica (Rice).